The chain runs to 241 residues: GTP cyclohydrolase III (241 aa).

The protein belongs to the archaeal-type GTP cyclohydrolase family.

The catalysed reaction is GTP + 3 H2O = 2-amino-5-formylamino-6-(5-phospho-D-ribosylamino)pyrimidin-4(3H)-one + 2 phosphate + 2 H(+). Functionally, catalyzes the formation of 2-amino-5-formylamino-6-ribofuranosylamino-4(3H)-pyrimidinone ribonucleotide monophosphate and inorganic phosphate from GTP. Also has an independent pyrophosphate phosphohydrolase activity. The polypeptide is GTP cyclohydrolase III (Aeropyrum pernix (strain ATCC 700893 / DSM 11879 / JCM 9820 / NBRC 100138 / K1)).